The chain runs to 292 residues: Tissue factor (292 aa).

Residues 1-32 (MAPPTRLQVPRPGTAVPYTVLLGWLLAQVARA) form the signal peptide. Residues 33 to 250 (ADTTGRAYNL…SREQGRAREM (218 aa)) lie on the Extracellular side of the membrane. 2 consecutive Fibronectin type-III domains span residues 35-126 (TTGR…PFRN) and 148-240 (QVGT…TECT). N41 carries an N-linked (GlcNAc...) asparagine glycan. Short sequence motifs (WKS motif) lie at residues 44-46 (WKS) and 75-77 (WKS). A disulfide bond links C79 and C87. N-linked (GlcNAc...) asparagine glycans are attached at residues N114, N154, N167, and N182. The cysteines at positions 216 and 239 are disulfide-linked. A helical transmembrane segment spans residues 251–271 (FFIIGAVVVVALLIIVLSVTV). The Cytoplasmic portion of the chain corresponds to 272-292 (YKCRKARAGPSGKESSPLNIA). C274 carries the S-palmitoyl cysteine lipid modification.

Belongs to the tissue factor family. In terms of assembly, interacts with HSPE; the interaction, inhibited by heparin, promotes the generation of activated factor X and activates coagulation in the presence of activated factor VII. Brain, heart.

It localises to the membrane. Initiates blood coagulation by forming a complex with circulating factor VII or VIIa. The [TF:VIIa] complex activates factors IX or X by specific limited proteolysis. TF plays a role in normal hemostasis by initiating the cell-surface assembly and propagation of the coagulation protease cascade. In Oryctolagus cuniculus (Rabbit), this protein is Tissue factor (F3).